We begin with the raw amino-acid sequence, 95 residues long: Protein TusB (95 aa).

It belongs to the DsrH/TusB family. Heterohexamer, formed by a dimer of trimers. The hexameric TusBCD complex contains 2 copies each of TusB, TusC and TusD. The TusBCD complex interacts with TusE.

The protein resides in the cytoplasm. Functionally, part of a sulfur-relay system required for 2-thiolation of 5-methylaminomethyl-2-thiouridine (mnm(5)s(2)U) at tRNA wobble positions. In Shigella sonnei (strain Ss046), this protein is Protein TusB.